Reading from the N-terminus, the 552-residue chain is MKFKYIVLLFALSLALITVNGLEIKDIDYSDSSQYLIITVSNPDNNINANISIIGYIDNKIDTQVEMFNYSIPKYSLMFIRKKMVFNEKGVHTVFVTIKSNNITYTFYKKINITYAYNSKVPVPEEEVTKKIEIEGLEFEICPYPYPPFYDFVYVTIRNNDYVPHYVNISFTASLQGTYYIIKDNKIIKSNPPSNGLIIKSWTPNVYVPPKSKIIIPIKVNFYYSGKYTITVKAVSDNHYSTEKTVKGNTVILKSLFGDEIKVYNVEIACPLYVYNVRCEDEYGDYAYSNWFDVDVNNTVDYDVYGTLQVFLCKKEGDNYLILNNKTINKYFLAKEFNDGYSIPVKLNTSALNPYDENFTIFVLCKTGNMESFYYKTFTKPIKINSLEVKNYPEHYYFVDESIFYDVYVNVTNNLNKKIYANISIKDIYNKTYSKEVELNKSCVNIIKFSGLKINAKDLSHDGKIKLKFIVTAITPPYEKYYIIKKNISINLSLIPTPPVYLCSNLNDEIFVGYPQNLSFSLKKVVGRCVETRVYITVPDDIKKYTILKRSI.

This is an uncharacterized protein from Methanocaldococcus jannaschii (strain ATCC 43067 / DSM 2661 / JAL-1 / JCM 10045 / NBRC 100440) (Methanococcus jannaschii).